Here is a 2278-residue protein sequence, read N- to C-terminus: Protein Ycf2 (2278 aa).

1632–1639 contacts ATP; that stretch reads GSIGTGRS.

Belongs to the Ycf2 family.

It is found in the plastid. The protein resides in the chloroplast stroma. In terms of biological role, probable ATPase of unknown function. Its presence in a non-photosynthetic plant (Epifagus virginiana) and experiments in tobacco indicate that it has an essential function which is probably not related to photosynthesis. The sequence is that of Protein Ycf2 from Solanum tuberosum (Potato).